A 504-amino-acid polypeptide reads, in one-letter code: Maturase K (504 aa).

This sequence belongs to the intron maturase 2 family. MatK subfamily.

It is found in the plastid. The protein localises to the chloroplast. Functionally, usually encoded in the trnK tRNA gene intron. Probably assists in splicing its own and other chloroplast group II introns. This is Maturase K from Aruncus dioicus (Goat's beard).